The chain runs to 317 residues: MTASSLRIASRRSQLAMVQTEWVRDELANAHPGLEISIEAMATQGDKILDVALAKIGDKGLFTKELEAQMLVNRADIAVHSLKDLPTNLPEGLMLGCITEREDPADALVMHAKNKDLTLATLPEGAVVGTSSLRRLAQLRYHYPHLTFKDVRGNVITRLEKLDSGQFDCLILAAAGLGRLGLGDRIHELIDPSISLHAVGQGALGIECRDGDAAVLEQIKVLEHRPTSLRCLAERAFLRTLEGGCQVPIGVNTRFEGDELVLTGMVASLDGKQLIRDELRAPQDQAEDLGNRLAELLRSQGAGEILAKIFAEARPEA.

Cysteine 245 is subject to S-(dipyrrolylmethanemethyl)cysteine.

It belongs to the HMBS family. In terms of assembly, monomer. The cofactor is dipyrromethane.

The catalysed reaction is 4 porphobilinogen + H2O = hydroxymethylbilane + 4 NH4(+). The protein operates within porphyrin-containing compound metabolism; protoporphyrin-IX biosynthesis; coproporphyrinogen-III from 5-aminolevulinate: step 2/4. It functions in the pathway porphyrin-containing compound metabolism; chlorophyll biosynthesis. Functionally, tetrapolymerization of the monopyrrole PBG into the hydroxymethylbilane pre-uroporphyrinogen in several discrete steps. This chain is Porphobilinogen deaminase, found in Synechococcus sp. (strain RCC307).